A 316-amino-acid chain; its full sequence is 4-hydroxy-3-methylbut-2-enyl diphosphate reductase (316 aa).

Position 12 (C12) interacts with [4Fe-4S] cluster. (2E)-4-hydroxy-3-methylbut-2-enyl diphosphate-binding residues include H41 and H74. Residues H41 and H74 each contribute to the dimethylallyl diphosphate site. The isopentenyl diphosphate site is built by H41 and H74. [4Fe-4S] cluster is bound at residue C96. H124 contributes to the (2E)-4-hydroxy-3-methylbut-2-enyl diphosphate binding site. A dimethylallyl diphosphate-binding site is contributed by H124. Residue H124 coordinates isopentenyl diphosphate. The active-site Proton donor is E126. T168 is a binding site for (2E)-4-hydroxy-3-methylbut-2-enyl diphosphate. [4Fe-4S] cluster is bound at residue C198. Residues S226, S227, N228, and S270 each coordinate (2E)-4-hydroxy-3-methylbut-2-enyl diphosphate. Residues S226, S227, N228, and S270 each contribute to the dimethylallyl diphosphate site. Isopentenyl diphosphate is bound by residues S226, S227, N228, and S270.

The protein belongs to the IspH family. The cofactor is [4Fe-4S] cluster.

The enzyme catalyses isopentenyl diphosphate + 2 oxidized [2Fe-2S]-[ferredoxin] + H2O = (2E)-4-hydroxy-3-methylbut-2-enyl diphosphate + 2 reduced [2Fe-2S]-[ferredoxin] + 2 H(+). The catalysed reaction is dimethylallyl diphosphate + 2 oxidized [2Fe-2S]-[ferredoxin] + H2O = (2E)-4-hydroxy-3-methylbut-2-enyl diphosphate + 2 reduced [2Fe-2S]-[ferredoxin] + 2 H(+). Its pathway is isoprenoid biosynthesis; dimethylallyl diphosphate biosynthesis; dimethylallyl diphosphate from (2E)-4-hydroxy-3-methylbutenyl diphosphate: step 1/1. It functions in the pathway isoprenoid biosynthesis; isopentenyl diphosphate biosynthesis via DXP pathway; isopentenyl diphosphate from 1-deoxy-D-xylulose 5-phosphate: step 6/6. Catalyzes the conversion of 1-hydroxy-2-methyl-2-(E)-butenyl 4-diphosphate (HMBPP) into a mixture of isopentenyl diphosphate (IPP) and dimethylallyl diphosphate (DMAPP). Acts in the terminal step of the DOXP/MEP pathway for isoprenoid precursor biosynthesis. This chain is 4-hydroxy-3-methylbut-2-enyl diphosphate reductase, found in Marinobacter nauticus (strain ATCC 700491 / DSM 11845 / VT8) (Marinobacter aquaeolei).